Reading from the N-terminus, the 201-residue chain is MGSLDLAKAGAILVKNALSGEMVELKSLWKEQTTVLLFLRRFGCQICRWIAKDMGKLKESCDVHQIRLVGIGPEEVGLKEFLDGNFFNGELYIDDSKQSYKDLGFKRYSALSVIPAALGKKVRDIVTKANADGVQGNFSGDLLQSGGMLIVSKGGEKVLLHFIQDSPGDYVPLETIVQTLGITANVTESQRPQCNDDVCTR.

The protein belongs to the peroxiredoxin-like PRXL2 family. Prostamide/prostaglandin F synthase subfamily.

Its subcellular location is the cytoplasm. The protein localises to the cytosol. It catalyses the reaction prostaglandin H2 + [thioredoxin]-dithiol = prostaglandin F2alpha + [thioredoxin]-disulfide. It carries out the reaction prostamide F2alpha + [thioredoxin]-disulfide = prostamide H2 + [thioredoxin]-dithiol. In terms of biological role, catalyzes the reduction of prostaglandin-ethanolamide H(2) (prostamide H(2)) to prostamide F(2alpha) with NADPH as proton donor. Also able to reduce prostaglandin H(2) to prostaglandin F(2alpha). This chain is Prostamide/prostaglandin F synthase (prxl2b), found in Xenopus laevis (African clawed frog).